A 451-amino-acid chain; its full sequence is DNA-directed RNA polymerase subunit Rpo1C (451 aa).

The tract at residues 1–68 is unknown; sequence MQDIIGKIED…DDDELLDAVE (68 aa). The DNA-directed RNA polymerase subunit Rpo1C stretch occupies residues 69–451; it reads DDYQRILKVQ…SVSVVMKERK (383 aa).

This sequence belongs to the RNA polymerase beta' chain family. Part of the RNA polymerase complex.

It is found in the cytoplasm. It catalyses the reaction RNA(n) + a ribonucleoside 5'-triphosphate = RNA(n+1) + diphosphate. DNA-dependent RNA polymerase (RNAP) catalyzes the transcription of DNA into RNA using the four ribonucleoside triphosphates as substrates. Forms part of the jaw domain. This chain is DNA-directed RNA polymerase subunit Rpo1C, found in Methanothermobacter thermautotrophicus (strain ATCC 29096 / DSM 1053 / JCM 10044 / NBRC 100330 / Delta H) (Methanobacterium thermoautotrophicum).